The sequence spans 168 residues: Transmembrane protein 31 (168 aa).

Residues 1 to 11 (MRLTEKSEGEQ) show a composition bias toward basic and acidic residues. Positions 1–63 (MRLTEKSEGE…LPSRRTPTTS (63 aa)) are disordered. 2 stretches are compositionally biased toward polar residues: residues 13-22 (LKPNNSNAPN) and 35-48 (HTPA…ADTQ). A compositionally biased stretch (low complexity) spans 49–63 (PSRCRLPSRRTPTTS). 2 helical membrane-spanning segments follow: residues 119–139 (IGLP…YKFF) and 148–168 (FFIL…LIFF).

The protein resides in the membrane. This chain is Transmembrane protein 31 (TMEM31), found in Homo sapiens (Human).